Consider the following 207-residue polypeptide: Holliday junction branch migration complex subunit RuvA (207 aa).

Residues methionine 1–asparagine 64 form a domain I region. Residues threonine 65–proline 143 are domain II. Positions alanine 144–threonine 158 are flexible linker. The tract at residues serine 159–isoleucine 207 is domain III.

This sequence belongs to the RuvA family. In terms of assembly, homotetramer. Forms an RuvA(8)-RuvB(12)-Holliday junction (HJ) complex. HJ DNA is sandwiched between 2 RuvA tetramers; dsDNA enters through RuvA and exits via RuvB. An RuvB hexamer assembles on each DNA strand where it exits the tetramer. Each RuvB hexamer is contacted by two RuvA subunits (via domain III) on 2 adjacent RuvB subunits; this complex drives branch migration. In the full resolvosome a probable DNA-RuvA(4)-RuvB(12)-RuvC(2) complex forms which resolves the HJ.

It localises to the cytoplasm. Its function is as follows. The RuvA-RuvB-RuvC complex processes Holliday junction (HJ) DNA during genetic recombination and DNA repair, while the RuvA-RuvB complex plays an important role in the rescue of blocked DNA replication forks via replication fork reversal (RFR). RuvA specifically binds to HJ cruciform DNA, conferring on it an open structure. The RuvB hexamer acts as an ATP-dependent pump, pulling dsDNA into and through the RuvAB complex. HJ branch migration allows RuvC to scan DNA until it finds its consensus sequence, where it cleaves and resolves the cruciform DNA. This is Holliday junction branch migration complex subunit RuvA from Aliivibrio fischeri (strain ATCC 700601 / ES114) (Vibrio fischeri).